The chain runs to 377 residues: Alanine racemase (377 aa).

Residue lysine 33 is the Proton acceptor; specific for D-alanine of the active site. Lysine 33 bears the N6-(pyridoxal phosphate)lysine mark. Substrate is bound at residue arginine 134. Catalysis depends on tyrosine 267, which acts as the Proton acceptor; specific for L-alanine. Methionine 315 serves as a coordination point for substrate.

It belongs to the alanine racemase family. Pyridoxal 5'-phosphate is required as a cofactor.

The enzyme catalyses L-alanine = D-alanine. It participates in amino-acid biosynthesis; D-alanine biosynthesis; D-alanine from L-alanine: step 1/1. Functionally, catalyzes the interconversion of L-alanine and D-alanine. May also act on other amino acids. The chain is Alanine racemase (alr) from Treponema pallidum subsp. pallidum (strain SS14).